We begin with the raw amino-acid sequence, 617 residues long: mRNA export factor MEX67 (617 aa).

The span at 1-10 (MSYRGRGGGY) shows a compositional bias: gly residues. A disordered region spans residues 1 to 24 (MSYRGRGGGYNNNRGQFSSGPHQH). LRR repeat units lie at residues 185 to 206 (DVDSIDLSNNELQDLQTLTSMA), 211 to 232 (KLQNLSLQNNNFTKIKVFETWR), and 237 to 258 (FLRELILFNNPIVQTNDPAEIQ). The NTF2 domain occupies 309-499 (LATNFIANYL…MIVASDTLLI (191 aa)). Disordered stretches follow at residues 442–469 (EVDGSASSAPSGPRGGSRYHSGPKHKRI) and 513–554 (LPSN…TTAD). Low complexity-rich tracts occupy residues 445 to 459 (GSASSAPSGPRGGSR) and 526 to 542 (ATSTPSPLPPTTITTPQ). A TAP-C domain is found at 565–617 (QIQQELLVKILLETKLNINYGIMLCEQSNWDYQQASVNFKNSAASLPSDAFVQ).

This sequence belongs to the NXF family. As to quaternary structure, interacts with nucleoporin complex protein MTR2.

It localises to the nucleus. The protein resides in the cytoplasm. Involved in the export of mRNA from the nucleus to the cytoplasm. The chain is mRNA export factor MEX67 from Candida albicans (strain SC5314 / ATCC MYA-2876) (Yeast).